Consider the following 205-residue polypeptide: NADH-quinone oxidoreductase subunit C (205 aa).

Belongs to the complex I 30 kDa subunit family. As to quaternary structure, NDH-1 is composed of 14 different subunits. Subunits NuoB, C, D, E, F, and G constitute the peripheral sector of the complex.

It localises to the cell inner membrane. It catalyses the reaction a quinone + NADH + 5 H(+)(in) = a quinol + NAD(+) + 4 H(+)(out). In terms of biological role, NDH-1 shuttles electrons from NADH, via FMN and iron-sulfur (Fe-S) centers, to quinones in the respiratory chain. The immediate electron acceptor for the enzyme in this species is believed to be ubiquinone. Couples the redox reaction to proton translocation (for every two electrons transferred, four hydrogen ions are translocated across the cytoplasmic membrane), and thus conserves the redox energy in a proton gradient. The chain is NADH-quinone oxidoreductase subunit C from Nitrosospira multiformis (strain ATCC 25196 / NCIMB 11849 / C 71).